The following is a 196-amino-acid chain: Holliday junction branch migration complex subunit RuvA (196 aa).

Residues 1-63 are domain I; sequence MINKIYGKIV…DDDVKLFGFL (63 aa). The segment at 64–142 is domain II; it reads NISEREVFED…KGDESSSYML (79 aa). Lys143 is a region of interest (flexible linker). Positions 143 to 196 are domain III; sequence KFKELEQSIVNMGFDRKLVVVAFREIMLSDKFLILKEAEQEQFLFTETLKRLSV.

This sequence belongs to the RuvA family. As to quaternary structure, homotetramer. Forms an RuvA(8)-RuvB(12)-Holliday junction (HJ) complex. HJ DNA is sandwiched between 2 RuvA tetramers; dsDNA enters through RuvA and exits via RuvB. An RuvB hexamer assembles on each DNA strand where it exits the tetramer. Each RuvB hexamer is contacted by two RuvA subunits (via domain III) on 2 adjacent RuvB subunits; this complex drives branch migration. In the full resolvosome a probable DNA-RuvA(4)-RuvB(12)-RuvC(2) complex forms which resolves the HJ.

It localises to the cytoplasm. Functionally, the RuvA-RuvB-RuvC complex processes Holliday junction (HJ) DNA during genetic recombination and DNA repair, while the RuvA-RuvB complex plays an important role in the rescue of blocked DNA replication forks via replication fork reversal (RFR). RuvA specifically binds to HJ cruciform DNA, conferring on it an open structure. The RuvB hexamer acts as an ATP-dependent pump, pulling dsDNA into and through the RuvAB complex. HJ branch migration allows RuvC to scan DNA until it finds its consensus sequence, where it cleaves and resolves the cruciform DNA. The chain is Holliday junction branch migration complex subunit RuvA from Borrelia duttonii (strain Ly).